A 341-amino-acid polypeptide reads, in one-letter code: Methionine import ATP-binding protein MetN 2 (341 aa).

Residues 2–241 (IKLNQIVKRY…PQHEVTKRFV (240 aa)) enclose the ABC transporter domain. 38-45 (GFSGAGKS) is an ATP binding site.

This sequence belongs to the ABC transporter superfamily. Methionine importer (TC 3.A.1.24) family. As to quaternary structure, the complex is composed of two ATP-binding proteins (MetN), two transmembrane proteins (MetI) and a solute-binding protein (MetQ).

It is found in the cell membrane. It catalyses the reaction L-methionine(out) + ATP + H2O = L-methionine(in) + ADP + phosphate + H(+). The catalysed reaction is D-methionine(out) + ATP + H2O = D-methionine(in) + ADP + phosphate + H(+). Part of the ABC transporter complex MetNIQ involved in methionine import. Responsible for energy coupling to the transport system. In Staphylococcus epidermidis (strain ATCC 35984 / DSM 28319 / BCRC 17069 / CCUG 31568 / BM 3577 / RP62A), this protein is Methionine import ATP-binding protein MetN 2.